The following is a 285-amino-acid chain: Putative quercetin 2,3-dioxygenase PA3240 (285 aa).

Residues His60, His62, His104, and Glu106 each contribute to the a divalent metal cation site.

The protein belongs to the pirin family. The cofactor is a divalent metal cation.

The enzyme catalyses quercetin + O2 = 2-(3,4-dihydroxybenzoyloxy)-4,6-dihydroxybenzoate + CO. It functions in the pathway flavonoid metabolism; quercetin degradation. Functionally, putative quercetin 2,3-dioxygenase. In Pseudomonas aeruginosa (strain ATCC 15692 / DSM 22644 / CIP 104116 / JCM 14847 / LMG 12228 / 1C / PRS 101 / PAO1), this protein is Putative quercetin 2,3-dioxygenase PA3240.